We begin with the raw amino-acid sequence, 480 residues long: Phenolic acid decarboxylase (480 aa).

The Mn(2+) site is built by N163, H185, and E227. Prenylated FMN is bound by residues 163 to 168 (NVGTYR) and 184 to 185 (MH). The active-site Proton donor is E278. Residues 443–466 (TTPVPPEPNPRETQLLDPPDGTEE) form a disordered region.

This sequence belongs to the UbiD family. YclC subfamily. Homohexamer. Requires prenylated FMN as cofactor. It depends on Mn(2+) as a cofactor.

It catalyses the reaction 4-hydroxybenzoate + H(+) = phenol + CO2. It carries out the reaction 3,4-dihydroxybenzoate + H(+) = catechol + CO2. With respect to regulation, inhibited by Zn(2+), (2,3,4)-trihydroxybenzoate and (3,4,5)-trihydroxybenzoate. Ammonium and rubidium ions decrease the activity of the carboxylation of 3,4-dihydroxybenzoate by about 20%. Its function is as follows. Involved in the non-oxidative decarboxylation and detoxification of phenolic derivatives under anaerobic conditions. Oxygen-sensitive phenolic acid decarboxylase that catalyzes the reversible decarboxylation of 4-hydroxybenzoate and 3,4-dihydroxybenzoate. In Sedimentibacter hydroxybenzoicus (Clostridium hydroxybenzoicum), this protein is Phenolic acid decarboxylase.